The following is a 95-amino-acid chain: MITPHNILRHELIGLKVEIVEAKNKAMIGIKGKVVDETRNTLVIEKEDGREVVIPKDIAVFLFQLKGCKVKVDGRLLIGRPEERLKKKIKILYPY.

The protein belongs to the eukaryotic/archaeal RNase P protein component 1 family. Consists of a catalytic RNA component and at least 4 protein subunits. Forms a subcomplex with Rnp4 which stimulates the catalytic RNA.

It is found in the cytoplasm. It catalyses the reaction Endonucleolytic cleavage of RNA, removing 5'-extranucleotides from tRNA precursor.. Part of ribonuclease P, a protein complex that generates mature tRNA molecules by cleaving their 5'-ends. This chain is Ribonuclease P protein component 1, found in Methanocaldococcus jannaschii (strain ATCC 43067 / DSM 2661 / JAL-1 / JCM 10045 / NBRC 100440) (Methanococcus jannaschii).